The following is a 260-amino-acid chain: Sugar fermentation stimulation protein homolog (260 aa).

The protein belongs to the SfsA family.

This chain is Sugar fermentation stimulation protein homolog, found in Chloroflexus aggregans (strain MD-66 / DSM 9485).